A 280-amino-acid polypeptide reads, in one-letter code: Meiotic driver wtf35 (280 aa).

The span at methionine 1–proline 29 shows a compositional bias: basic and acidic residues. Disordered regions lie at residues methionine 1–asparagine 49 and asparagine 64–aspartate 100. 4 helical membrane passes run phenylalanine 105–cysteine 125, tryptophan 142–phenylalanine 162, isoleucine 184–alanine 204, and serine 218–valine 238.

Belongs to the WTF family. Homomer. Forms protein aggregates. The two isoforms can interact with each other and with themselves. High sequence similarity is required for their interaction.

Its subcellular location is the spore membrane. It localises to the vacuole membrane. It is found in the ascus epiplasm. The protein resides in the cytoplasm. The protein localises to the endoplasmic reticulum membrane. In terms of biological role, promotes unequal transmission of alleles from the parental zygote to progeny spores by acting as poison/antidote system where the poison and antidote proteins are produced from the same locus; the poison component is trans-acting and targets all spores within an ascus whereas the antidote component is spore-specific, leading to poisoning of all progeny that do not inherit the allele. Functionally, localizes isoform 2 to the vacuole thereby facilitating its degradation. Its function is as follows. Forms toxic aggregates that disrupt spore maturation. The chain is Meiotic driver wtf35 from Schizosaccharomyces pombe (Fission yeast).